Reading from the N-terminus, the 881-residue chain is NACHT, LRR and PYD domains-containing protein 6 (881 aa).

One can recognise a Pyrin domain in the interval 1–129 (MDAAGASCSS…EHVLRQHAKV (129 aa)). Serine 104 is modified (phosphoserine). Positions 154–175 (AGEDELLGTSGEPEPERARRSD) are disordered. Residues 194-510 (LTVVLQGPAG…EFLAALSYLL (317 aa)) enclose the NACHT domain. 200–207 (GPAGIGKT) provides a ligand contact to ATP. An LRR 1 repeat occupies 459–484 (EKDLERLKLQGSQVQTMFLSKKELPG). Residues 579-611 (QSQPKVATVGAEKKDELKDEEAEEEEEEEEEEE) form a disordered region. The span at 596–611 (KDEEAEEEEEEEEEEE) shows a compositional bias: acidic residues. 3 LRR repeats span residues 637 to 660 (LSSL…VLSY), 749 to 772 (APSL…LLSQ), and 839 to 863 (TLSL…TLKP).

It belongs to the NLRP family. Homomultimer; forms the NLRP6 inflammasome polymeric complex, a filament composed of homopolymers in response to pathogens and other damage-associated signals. The core of NLRP6 inflammasomes consists of a signal sensor component (NLRP6), an adapter (PYCARD/ASC), which recruits effector pro-inflammatory caspases (CASP1 and CASP4). Interacts (via pyrin domain) with PYCARD/ASC (via pyrin domain); interaction takes place following NLRP6 activation and formation of liquid-liquid phase separation (LLPS), initiating nucleation which greatly enhances further addition of soluble PYCARD/ASC molecules to the speck in a prion-like polymerization process. Clustered PYCARD/ASC nucleates the formation of CASP1 (or possibly CASP4) filaments through the interaction of their respective CARD domains, acting as a platform for CASP1 polymerization. CASP1 filament formation increases local enzyme concentration, resulting in trans-autocleavage and activation. Active CASP1 then processes IL1B and IL18 precursors, leading to the release of mature cytokines in the extracellular milieu and inflammatory response. Interacts with DHX15. In terms of processing, polyubiquitinated with 'Lys-63'-linked chains, promoting the interaction with PYCARD/ASC and formation of the NLRP6 inflammasome. Deubiquitination by CYLD decreases the interaction with PYCARD/ASC. Detected in several tissues. Expressed in renal epithelial cells in medullary thick ascending limb of Henle, as well as in salivary gland apical epithelium (at protein level). Isoform 1 is widely expressed. Isoform 2 is primarily expressed in kidney (at protein level).

The protein localises to the cytoplasm. It localises to the inflammasome. Its subcellular location is the cell membrane. The protein resides in the nucleus membrane. Functionally, acts as the sensor component of the NLRP6 inflammasome, which mediates inflammasome activation in response to various pathogen-associated signals, leading to maturation and secretion of IL1B and IL18. Inflammasomes are supramolecular complexes that assemble in the cytosol in response to pathogens and other damage-associated signals and play critical roles in innate immunity and inflammation. Acts as a recognition receptor (PRR): recognizes and binds specific pathogens and other damage-associated signals, such as lipoteichoic acid (LTA), a cell-wall component of Gram-positive bacteria, or double stranded RNA (dsRNA). May also recognize and bind lipopolysaccharide (LPS), a major component of the outer membrane of Gram-negative bacteria; however, LPS is probably not a major activator of the NLRP6 inflammasome. Following LTA- or dsRNA-binding, NLRP6 undergoes liquid-liquid phase separation (LLPS), enhancing multivalent interactions, an essential step for the formation of the NLRP6 inflammasome polymeric complex. The NLRP6 inflammasome acts by promoting recruitment of effector pro-inflammatory caspases (CASP1 and/or CASP4) that catalyze maturation and secretion of IL1B and IL18 in the extracellular milieu. The NLRP6 inflammasome plays a central role in the maintenance of epithelial integrity and host defense against microbial infections in the intestine. Required to restrict infection against Gram-positive bacteria by recognizing lipoteichoic acid (LTA), leading to recruitment of CASP4 and CASP1, and subsequent maturation and secretion of IL1B and IL18. Involved in intestinal antiviral innate immunity together with DHX15: recognizes and binds viral dsRNA to restrict infection by enteric viruses through the interferon pathway and GSDMD-dependent release of IL18. Required to prevent infection by the apicomplexan parasite Cryptosporidium in enterocytes by promoting GSDMD-dependent release of IL18. The NLRP6 inflammasome may also regulate the gut microbiota composition by acting as a sensor of microbiota-associated metabolites to form a PYCARD/ASC-dependent inflammasome for downstream IL18 release and secretion of antimicrobial peptides. Essential for gut mucosal self-renewal and proliferation. Regulate mucus secretion in an inflammasome- and autophagy-dependent manner to prevent invasion by enteric bacteria,. During systemic bacterial infections, the NLRP6 inflammasome negatively regulates neutrophil recruitment and neutrophil extracellular traps (NETs) formation. May promote peripheral nerve recovery following injury via an inflammasome-independent mechanism. This Rattus norvegicus (Rat) protein is NACHT, LRR and PYD domains-containing protein 6.